Here is a 625-residue protein sequence, read N- to C-terminus: Chaperone protein HtpG (625 aa).

Residues 1 to 330 (MAKQVQNFNA…SSDLSLNVSR (330 aa)) are a; substrate-binding. Positions 331–545 (ELLQQDRQVT…SADPSAHMQK (215 aa)) are b. Residues 546 to 625 (LMAQMGKEYA…MVQAADSTKH (80 aa)) are c.

Belongs to the heat shock protein 90 family. In terms of assembly, homodimer.

Its subcellular location is the cytoplasm. Its function is as follows. Molecular chaperone. Has ATPase activity. The protein is Chaperone protein HtpG of Bdellovibrio bacteriovorus (strain ATCC 15356 / DSM 50701 / NCIMB 9529 / HD100).